A 287-amino-acid chain; its full sequence is Inhibitory synaptic factor 1 (287 aa).

A disordered region spans residues 1–22 (MSQSRAPAREPSETPSQREQIR). The stretch at 25–58 (MKMVIQQLEGILKELKDVAHELREVVGQIDKLTS) forms a coiled coil. 2 disordered regions span residues 113–174 (RRSA…GTRE) and 189–287 (CDDD…NKDL). Residues 153–167 (EEASSSTHSQSQKTS) are compositionally biased toward low complexity. Positions 189–209 (CDDDEDEDEDEDGRDEEEDKL) are enriched in acidic residues. Residues 259–274 (RNSSTQTVSDKSTQTL) are compositionally biased toward polar residues.

The protein belongs to the INSYN1 family.

It localises to the postsynaptic density. Its function is as follows. May be a component of the protein machinery at the inhibitory synapses, probably acting as a scaffold. In Danio rerio (Zebrafish), this protein is Inhibitory synaptic factor 1.